Here is a 98-residue protein sequence, read N- to C-terminus: NADH-ubiquinone oxidoreductase chain 4L (98 aa).

3 helical membrane-spanning segments follow: residues 1–21 (MPVV…GLLI), 29–49 (SLLC…VTVL), and 61–81 (IILL…LVMV).

This sequence belongs to the complex I subunit 4L family. In terms of assembly, core subunit of respiratory chain NADH dehydrogenase (Complex I) which is composed of 45 different subunits.

It localises to the mitochondrion inner membrane. The enzyme catalyses a ubiquinone + NADH + 5 H(+)(in) = a ubiquinol + NAD(+) + 4 H(+)(out). Functionally, core subunit of the mitochondrial membrane respiratory chain NADH dehydrogenase (Complex I) which catalyzes electron transfer from NADH through the respiratory chain, using ubiquinone as an electron acceptor. Part of the enzyme membrane arm which is embedded in the lipid bilayer and involved in proton translocation. This Ursus maritimus (Polar bear) protein is NADH-ubiquinone oxidoreductase chain 4L (MT-ND4L).